A 439-amino-acid polypeptide reads, in one-letter code: Chitinase-like protein Idgf1 (439 aa).

The first 20 residues, 1–20 (MRFQLCYLLGLLSVTSLSHA), serve as a signal peptide directing secretion. In terms of domain architecture, GH18 spans 22 to 439 (SNLICYYDST…IVRSIKYFMG (418 aa)). A disulfide bridge links Cys26 with Cys53. N-linked (GlcNAc...) asparagine glycans are attached at residues Asn122, Asn218, and Asn346. Cys340 and Cys423 are oxidised to a cystine.

Belongs to the glycosyl hydrolase 18 family. IDGF subfamily. Glycosylated.

It localises to the secreted. Functionally, cooperates with insulin-like peptides to stimulate the proliferation, polarization and motility of imaginal disk cells. May act by stabilizing the binding of insulin-like peptides to its receptor through a simultaneous interaction with both molecules to form a multiprotein signaling complex. This chain is Chitinase-like protein Idgf1 (Idgf1), found in Drosophila yakuba (Fruit fly).